A 133-amino-acid chain; its full sequence is MGMTSDTIADLLTRIRNALKAEHLYVDLEHSKMREAIVRILKQHGFLAHYLVKEENRKRTMRIFLQYSNDRRPVIRQLKRVSKPSRRVYVPAAKIPYVFGNMGISVLSTSQGVLDGATARAKNIGGELLCLVW.

Belongs to the universal ribosomal protein uS8 family. As to quaternary structure, part of the 30S ribosomal subunit. Contacts proteins S5 and S12.

Functionally, one of the primary rRNA binding proteins, it binds directly to 16S rRNA central domain where it helps coordinate assembly of the platform of the 30S subunit. The protein is Small ribosomal subunit protein uS8 of Chlamydia caviae (strain ATCC VR-813 / DSM 19441 / 03DC25 / GPIC) (Chlamydophila caviae).